We begin with the raw amino-acid sequence, 68 residues long: MFTTKKSLLLLFFLGTISLSLCEEERGADEEEGDGEKLTKRALSILRGLEKLAKMGIALTNCKATKKC.

Residues 1–22 (MFTTKKSLLLLFFLGTISLSLC) form the signal peptide. The propeptide occupies 23–39 (EEERGADEEEGDGEKLT). Cys-62 and Cys-68 are joined by a disulfide.

As to expression, expressed by the skin glands.

The protein localises to the secreted. Functionally, antimicrobial activity against Gram-negative bacterium E.coli. Stimulates insulin release. The polypeptide is Palustrin-1c (Lithobates palustris (Pickerel frog)).